The primary structure comprises 258 residues: Hydroxyacylglutathione hydrolase (258 aa).

Zn(2+)-binding residues include H52, H54, D56, H57, H109, D126, and H164.

This sequence belongs to the metallo-beta-lactamase superfamily. Glyoxalase II family. In terms of assembly, monomer. Requires Zn(2+) as cofactor.

The enzyme catalyses an S-(2-hydroxyacyl)glutathione + H2O = a 2-hydroxy carboxylate + glutathione + H(+). Its pathway is secondary metabolite metabolism; methylglyoxal degradation; (R)-lactate from methylglyoxal: step 2/2. Functionally, thiolesterase that catalyzes the hydrolysis of S-D-lactoyl-glutathione to form glutathione and D-lactic acid. The chain is Hydroxyacylglutathione hydrolase from Xylella fastidiosa (strain 9a5c).